Consider the following 48-residue polypeptide: Large ribosomal subunit protein bL34c (48 aa).

Residues 18–48 (SGFRSRMATPQGRKTIRNRRKKGRKNLTLRR) are disordered. The span at 31-48 (KTIRNRRKKGRKNLTLRR) shows a compositional bias: basic residues.

The protein belongs to the bacterial ribosomal protein bL34 family.

It is found in the plastid. The protein resides in the chloroplast. The chain is Large ribosomal subunit protein bL34c from Phaeodactylum tricornutum (strain CCAP 1055/1).